The primary structure comprises 711 residues: Polyribonucleotide nucleotidyltransferase (711 aa).

Mg(2+)-binding residues include D486 and D492. The region spanning 553-612 (PRIHTIKINPDKIKDVIGKGGSVIRALTEETGTTIEIEDDGTVKIAATDGEKAKHAIRRI) is the KH domain. The S1 motif domain occupies 622–690 (GRVYTGKVTR…RQGRIRLSIK (69 aa)). The segment at 689-711 (IKEATEQSQPAAAPEAPAAEQGE) is disordered. A compositionally biased stretch (low complexity) spans 694 to 711 (EQSQPAAAPEAPAAEQGE).

Belongs to the polyribonucleotide nucleotidyltransferase family. As to quaternary structure, component of the RNA degradosome, which is a multiprotein complex involved in RNA processing and mRNA degradation. Mg(2+) serves as cofactor.

The protein resides in the cytoplasm. It carries out the reaction RNA(n+1) + phosphate = RNA(n) + a ribonucleoside 5'-diphosphate. Involved in mRNA degradation. Catalyzes the phosphorolysis of single-stranded polyribonucleotides processively in the 3'- to 5'-direction. The chain is Polyribonucleotide nucleotidyltransferase from Escherichia coli (strain SE11).